The chain runs to 597 residues: Elongation factor 4 (597 aa).

In terms of domain architecture, tr-type G spans 2 to 184 (KNIRNFSIIA…EIVAKIPAPT (183 aa)). GTP contacts are provided by residues 14 to 19 (DHGKST) and 131 to 134 (NKID).

Belongs to the TRAFAC class translation factor GTPase superfamily. Classic translation factor GTPase family. LepA subfamily.

It localises to the cell inner membrane. The catalysed reaction is GTP + H2O = GDP + phosphate + H(+). In terms of biological role, required for accurate and efficient protein synthesis under certain stress conditions. May act as a fidelity factor of the translation reaction, by catalyzing a one-codon backward translocation of tRNAs on improperly translocated ribosomes. Back-translocation proceeds from a post-translocation (POST) complex to a pre-translocation (PRE) complex, thus giving elongation factor G a second chance to translocate the tRNAs correctly. Binds to ribosomes in a GTP-dependent manner. In Neisseria meningitidis serogroup C (strain 053442), this protein is Elongation factor 4.